Reading from the N-terminus, the 173-residue chain is Co-chaperone protein HscB homolog (173 aa).

The J domain maps to 5 to 77 (CHFALFDLQP…SQRARYLLAL (73 aa)).

The protein belongs to the HscB family. In terms of assembly, interacts with HscA and stimulates its ATPase activity.

Functionally, co-chaperone involved in the maturation of iron-sulfur cluster-containing proteins. Seems to help targeting proteins to be folded toward HscA. This is Co-chaperone protein HscB homolog from Ectopseudomonas mendocina (strain ymp) (Pseudomonas mendocina).